A 449-amino-acid polypeptide reads, in one-letter code: Myb family transcription factor PHL6 (449 aa).

Residues 49–72 are disordered; that stretch reads PFIRSQSPDSPGQLWPKNSSQSTF. Positions 238–298 constitute an HTH myb-type domain; it reads ANQKSRMRWT…HLQKYRLAKY (61 aa). A DNA-binding region (H-T-H motif) is located at residues 269–294; sequence PKAVKKLMNVEGLTIYHVKSHLQKYR. The tract at residues 301-327 is disordered; sequence EKKEEKRTDNSEEKKLALSKSEADEKK. The interval 334–354 is coiled coil; that stretch reads TEALRMQMEVQKQLHEQLEVQ. Positions 347–352 match the LHEQLE motif; sequence LHEQLE. The tract at residues 376-449 is disordered; it reads RKTGRWISSS…NIAESEDPKR (74 aa). A compositionally biased stretch (polar residues) spans 381–410; it reads WISSSSQTVLSPSDDSIPDSQNMSKTKASS.

The protein belongs to the MYB-CC family.

The protein localises to the nucleus. The protein is Myb family transcription factor PHL6 of Arabidopsis thaliana (Mouse-ear cress).